The chain runs to 229 residues: Enolase-phosphatase E1 (229 aa).

Residues 207–229 form a disordered region; that stretch reads RDPASHHPQVQRFDDIHPEQIPA. Positions 218–229 are enriched in basic and acidic residues; sequence RFDDIHPEQIPA.

This sequence belongs to the HAD-like hydrolase superfamily. MasA/MtnC family. In terms of assembly, monomer. It depends on Mg(2+) as a cofactor.

The enzyme catalyses 5-methylsulfanyl-2,3-dioxopentyl phosphate + H2O = 1,2-dihydroxy-5-(methylsulfanyl)pent-1-en-3-one + phosphate. Its pathway is amino-acid biosynthesis; L-methionine biosynthesis via salvage pathway; L-methionine from S-methyl-5-thio-alpha-D-ribose 1-phosphate: step 3/6. The protein operates within amino-acid biosynthesis; L-methionine biosynthesis via salvage pathway; L-methionine from S-methyl-5-thio-alpha-D-ribose 1-phosphate: step 4/6. Bifunctional enzyme that catalyzes the enolization of 2,3-diketo-5-methylthiopentyl-1-phosphate (DK-MTP-1-P) into the intermediate 2-hydroxy-3-keto-5-methylthiopentenyl-1-phosphate (HK-MTPenyl-1-P), which is then dephosphorylated to form the acireductone 1,2-dihydroxy-3-keto-5-methylthiopentene (DHK-MTPene). This is Enolase-phosphatase E1 from Klebsiella pneumoniae (strain 342).